Reading from the N-terminus, the 302-residue chain is L-glutamate/L-aspartate-binding protein (302 aa).

Positions 1-23 (MRIAPSLLSTAIVAALLSAPVVA) are cleaved as a signal peptide.

This sequence belongs to the bacterial solute-binding protein 3 family.

The protein localises to the periplasm. Its function is as follows. Binds L-glutamate and L-aspartate. The protein is L-glutamate/L-aspartate-binding protein of Pseudomonas aeruginosa (strain ATCC 15692 / DSM 22644 / CIP 104116 / JCM 14847 / LMG 12228 / 1C / PRS 101 / PAO1).